A 171-amino-acid polypeptide reads, in one-letter code: Peptide methionine sulfoxide reductase MsrA (171 aa).

C13 is an active-site residue.

Belongs to the MsrA Met sulfoxide reductase family.

It carries out the reaction L-methionyl-[protein] + [thioredoxin]-disulfide + H2O = L-methionyl-(S)-S-oxide-[protein] + [thioredoxin]-dithiol. The catalysed reaction is [thioredoxin]-disulfide + L-methionine + H2O = L-methionine (S)-S-oxide + [thioredoxin]-dithiol. Functionally, has an important function as a repair enzyme for proteins that have been inactivated by oxidation. Catalyzes the reversible oxidation-reduction of methionine sulfoxide in proteins to methionine. In Mycobacterium ulcerans (strain Agy99), this protein is Peptide methionine sulfoxide reductase MsrA.